Reading from the N-terminus, the 77-residue chain is Acyl carrier protein (77 aa).

Positions serine 2–glutamine 77 constitute a Carrier domain. Position 37 is an O-(pantetheine 4'-phosphoryl)serine (serine 37).

The protein belongs to the acyl carrier protein (ACP) family. 4'-phosphopantetheine is transferred from CoA to a specific serine of apo-ACP by AcpS. This modification is essential for activity because fatty acids are bound in thioester linkage to the sulfhydryl of the prosthetic group.

The protein resides in the cytoplasm. Its pathway is lipid metabolism; fatty acid biosynthesis. Carrier of the growing fatty acid chain in fatty acid biosynthesis. In Hahella chejuensis (strain KCTC 2396), this protein is Acyl carrier protein.